The following is a 260-amino-acid chain: Carbonic anhydrase 3 (260 aa).

Residue A2 is modified to N-acetylalanine. The Alpha-carbonic anhydrase domain occupies 3 to 259 (KEWGYADHNG…IKGRIVKASF (257 aa)). A phosphoserine mark is found at S29, S43, S50, and S55. An involved in proton transfer region spans residues 64-67 (KTCR). Residue T73 is modified to Phosphothreonine. Positions 94, 96, and 119 each coordinate Zn(2+). Position 127 is a phosphotyrosine (Y127). T176 is subject to Phosphothreonine. S-glutathionyl cysteine is present on residues C182 and C187. Residue 198-199 (TT) participates in substrate binding. T216 is modified (phosphothreonine). S219 is modified (phosphoserine).

It belongs to the alpha-carbonic anhydrase family. The cofactor is Zn(2+). S-thiolated both by thiol-disulfide exchange with glutathione disulfide and by oxyradical-initiated S-thiolation with reduced glutathione. Post-translationally, S-glutathionylated in hepatocytes under oxidative stress.

Its subcellular location is the cytoplasm. The catalysed reaction is hydrogencarbonate + H(+) = CO2 + H2O. Its activity is regulated as follows. Inhibited by acetazolamide. Reversible hydration of carbon dioxide. The chain is Carbonic anhydrase 3 from Sus scrofa (Pig).